The following is a 1312-amino-acid chain: Multidrug resistance protein 3 (1312 aa).

The chain crosses the membrane as a helical span at residues 51–71 (GFIDYILLIGGIIGAMAAGVL). The 311-residue stretch at 59 to 369 (IGGIIGAMAA…VAMPINALST (311 aa)) folds into the ABC transmembrane type-1 1 domain. Asparagine 98 is a glycosylation site (N-linked (GlcNAc...) asparagine). Transmembrane regions (helical) follow at residues 127–147 (IYFA…FFVL), 197–217 (KFGV…IGFS), 224–244 (LVIM…GFFA), 302–322 (VVGV…ALGS), and 344–364 (MVVF…AMPI). Residues 404 to 643 (IKLEDVQFRY…KATYYGLVKR (240 aa)) enclose the ABC transporter 1 domain. 439–446 (GASGCGKS) lines the ATP pocket. The 310-residue stretch at 724-1033 (LLSFLGLIGG…LGQMIPDVGK (310 aa)) folds into the ABC transmembrane type-1 2 domain. Helical transmembrane passes span 725–745 (LSFL…FYMI) and 776–796 (IWIL…LGLF). N-linked (GlcNAc...) asparagine glycosylation occurs at asparagine 819. The next 3 membrane-spanning stretches (helical) occupy residues 852–872 (VGNV…AFYY), 874–894 (WKVA…VFLN), and 958–978 (AFVS…SFYI). An ABC transporter 2 domain is found at 1068 to 1307 (IEFKDICFRY…KGFYYTLAMQ (240 aa)). 1103–1110 (GASGCGKS) is an ATP binding site.

Belongs to the ABC transporter superfamily. ABCB family. Multidrug resistance exporter (TC 3.A.1.201) subfamily.

It is found in the membrane. The enzyme catalyses ATP + H2O + xenobioticSide 1 = ADP + phosphate + xenobioticSide 2.. Its function is as follows. Energy-dependent efflux pump responsible for decreased drug accumulation in multidrug resistance parasites. This chain is Multidrug resistance protein 3, found in Entamoeba histolytica (strain ATCC 30459 / HM-1:IMSS / ABRM).